The primary structure comprises 122 residues: Large ribosomal subunit protein uL14c (122 aa).

This sequence belongs to the universal ribosomal protein uL14 family. Part of the 50S ribosomal subunit.

It localises to the plastid. It is found in the chloroplast. Its function is as follows. Binds to 23S rRNA. In Chlamydomonas reinhardtii (Chlamydomonas smithii), this protein is Large ribosomal subunit protein uL14c.